Reading from the N-terminus, the 548-residue chain is Membrane protein insertase YidC (548 aa).

Residues 6 to 26 (NLLVIALLFVSFMIWQAWEQD) traverse the membrane as a helical segment. A disordered region spans residues 28-56 (NPQPQTQQTTQTTTTAAGSAADQGVPASG). Residues 29–42 (PQPQTQQTTQTTTT) are compositionally biased toward low complexity. The next 4 helical transmembrane spans lie at 350–370 (FVGNWGFSIIIITFIVRGIMY), 424–444 (FPLIIQMPIFLALYYMLMGSI), 458–478 (LSAQDPYYILPILMGVTMFFI), and 499–519 (PVIFTVFFLWFPSGLVLYYIV).

It belongs to the OXA1/ALB3/YidC family. Type 1 subfamily. In terms of assembly, interacts with the Sec translocase complex via SecD. Specifically interacts with transmembrane segments of nascent integral membrane proteins during membrane integration.

It localises to the cell inner membrane. Functionally, required for the insertion and/or proper folding and/or complex formation of integral membrane proteins into the membrane. Involved in integration of membrane proteins that insert both dependently and independently of the Sec translocase complex, as well as at least some lipoproteins. Aids folding of multispanning membrane proteins. This is Membrane protein insertase YidC from Salmonella dublin (strain CT_02021853).